Reading from the N-terminus, the 694-residue chain is Elongation factor G (694 aa).

Positions 6–288 (KLYRNIGIAA…GVIEYLPSPT (283 aa)) constitute a tr-type G domain. Residues 15–22 (AHVDAGKT), 86–90 (DTPGH), and 140–143 (NKMD) contribute to the GTP site.

This sequence belongs to the TRAFAC class translation factor GTPase superfamily. Classic translation factor GTPase family. EF-G/EF-2 subfamily.

Its subcellular location is the cytoplasm. Functionally, catalyzes the GTP-dependent ribosomal translocation step during translation elongation. During this step, the ribosome changes from the pre-translocational (PRE) to the post-translocational (POST) state as the newly formed A-site-bound peptidyl-tRNA and P-site-bound deacylated tRNA move to the P and E sites, respectively. Catalyzes the coordinated movement of the two tRNA molecules, the mRNA and conformational changes in the ribosome. The protein is Elongation factor G of Legionella pneumophila (strain Corby).